The primary structure comprises 183 residues: Peptidyl-tRNA hydrolase (183 aa).

Residue Tyr15 participates in tRNA binding. Residue His20 is the Proton acceptor of the active site. Residues Tyr67 and Asn69 each coordinate tRNA.

This sequence belongs to the PTH family. In terms of assembly, monomer.

Its subcellular location is the cytoplasm. It carries out the reaction an N-acyl-L-alpha-aminoacyl-tRNA + H2O = an N-acyl-L-amino acid + a tRNA + H(+). Its function is as follows. Hydrolyzes ribosome-free peptidyl-tRNAs (with 1 or more amino acids incorporated), which drop off the ribosome during protein synthesis, or as a result of ribosome stalling. In terms of biological role, catalyzes the release of premature peptidyl moieties from peptidyl-tRNA molecules trapped in stalled 50S ribosomal subunits, and thus maintains levels of free tRNAs and 50S ribosomes. In Chlamydia caviae (strain ATCC VR-813 / DSM 19441 / 03DC25 / GPIC) (Chlamydophila caviae), this protein is Peptidyl-tRNA hydrolase.